The sequence spans 120 residues: MSKLKITNARRKQRVRLSLRRIANGRPRLSVFRSSKHIYAQVIDDLKGETLASASSLEKAMRDTGNTGANIDAAKAVGKLLAERAVKNGVTEVVFDRGGYLYHGRIKALADAARESGLSF.

It belongs to the universal ribosomal protein uL18 family. Part of the 50S ribosomal subunit; part of the 5S rRNA/L5/L18/L25 subcomplex. Contacts the 5S and 23S rRNAs.

This is one of the proteins that bind and probably mediate the attachment of the 5S RNA into the large ribosomal subunit, where it forms part of the central protuberance. The sequence is that of Large ribosomal subunit protein uL18 from Rhodopseudomonas palustris (strain BisB18).